We begin with the raw amino-acid sequence, 388 residues long: Probable proton-coupled zinc antiporter SLC30A3 (388 aa).

The tract at residues 1–42 is disordered; sequence MEPSPASGGSETTRLVSPRDRSSAGGGLRLKSLFTEPSEPLP. Topologically, residues 1-75 are cytoplasmic; it reads MEPSPASGGS…SPERAQARRQ (75 aa). Phosphoserine occurs at positions 63 and 66. A helical membrane pass occupies residues 76–96; sequence LYAACVVCFIFMAGEVVGGYL. The Lumenal portion of the chain corresponds to 97-105; sequence AHSLAIMTD. A helical membrane pass occupies residues 106 to 126; sequence AAHLLADIGSMMASLFSLWLS. 2 residues coordinate Zn(2+): H108 and D112. Topologically, residues 127–145 are cytoplasmic; that stretch reads TRPATRTMTFGWHRSETLG. Residues 146–166 traverse the membrane as a helical segment; the sequence is ALASVVSLWIVTGILLYLAFL. Residues 167–177 lie on the Lumenal side of the membrane; it reads RLLHSDYHIEA. A helical membrane pass occupies residues 178–198; the sequence is GAMLLTASIAVCANMIMAFVL. Residues 199–235 are Cytoplasmic-facing; it reads HQTGAPHSHGPRGAEYAPLEEGHGHPLSLGNTSVRAA. The chain crosses the membrane as a helical span at residues 236 to 256; that stretch reads FVHVLGDLLQSLGVLAASILI. Zn(2+) is bound by residues H238 and D242. At 257 to 263 the chain is on the lumenal side; sequence YFKPQYK. The chain crosses the membrane as a helical span at residues 264–284; the sequence is VADPISTFLFSICALGSTAPT. Residues 285–388 lie on the Cytoplasmic side of the membrane; the sequence is LRDVLLVLME…CLRCREPPKA (104 aa).

It belongs to the cation diffusion facilitator (CDF) transporter (TC 2.A.4) family. SLC30A subfamily. Homodimer. Homodimerization could regulate efficiency of zinc transport. Interacts with TMEM163.

Its subcellular location is the cytoplasmic vesicle. The protein resides in the secretory vesicle. It is found in the synaptic vesicle membrane. It localises to the synapse. The protein localises to the synaptosome. Its subcellular location is the late endosome membrane. The protein resides in the lysosome membrane. It catalyses the reaction Zn(2+)(in) + 2 H(+)(out) = Zn(2+)(out) + 2 H(+)(in). Probable proton-coupled zinc ion antiporter mediating the import of zinc from cytoplasm into synaptic vesicles and participating to cellular zinc ion homeostasis in the brain. The polypeptide is Probable proton-coupled zinc antiporter SLC30A3 (Rattus norvegicus (Rat)).